Here is a 265-residue protein sequence, read N- to C-terminus: Polyprenol monophosphomannose synthase (265 aa).

Positions 1-10 (MSVPGEREQG) are enriched in basic and acidic residues. The tract at residues 1 to 21 (MSVPGEREQGAGEDPATVRPT) is disordered.

It belongs to the glycosyltransferase 2 family. Interacts with Lnt (also called Ppm2, AC A0QZ13) upon coexpression in E.coli, which increases the PPM synthase activity of this protein.

Its subcellular location is the cytoplasm. The enzyme catalyses a di-trans,poly-cis-dolichyl phosphate + GDP-alpha-D-mannose = a di-trans,poly-cis-dolichyl beta-D-mannosyl phosphate + GDP. Its function is as follows. Transfers mannose from GDP-mannose to lipid acceptors to form polyprenol monophosphomannose (PPM); catalytic activity in vitro is enhanced by Lnt (AC A0QZ13). PMM is an alkai-stable sugar donor which adds mannose-phosphate residues to triacylated-PIM2, eventually leading to generation of the cell wall glycolipid lipoglycan modulins lipoarabinomannan (LAM) and lipomannan (LM). This chain is Polyprenol monophosphomannose synthase, found in Mycolicibacterium smegmatis (strain ATCC 700084 / mc(2)155) (Mycobacterium smegmatis).